The following is an 83-amino-acid chain: Mu-theraphotoxin-Hhn2b 2 (83 aa).

Residues 1 to 21 (MKASMFLALAGLVLLFVVCYA) form the signal peptide. A propeptide spanning residues 22-48 (SESEEKEFPRELISKIFTVDDFKGEER) is cleaved from the precursor. 3 cysteine pairs are disulfide-bonded: C50–C65, C57–C70, and C64–C77. A Leucine amide modification is found at L81.

This sequence belongs to the neurotoxin 10 (Hwtx-1) family. 14 (Hntx-1) subfamily. Monomer. Expressed by the venom gland.

The protein localises to the secreted. Its function is as follows. Weakly blocks the rat SCN2A/SCN1B (Nav1.2/beta-1) sodium channel (IC(50)=68 uM) and the insect sodium channel para/tipE (IC(50)=4.3 uM), without altering the activation or inactivation kinetics (depressant toxin). The chain is Mu-theraphotoxin-Hhn2b 2 from Cyriopagopus hainanus (Chinese bird spider).